The chain runs to 2537 residues: Histone-lysine N-methyltransferase SETD2 (2537 aa).

Positions 1–12 (MKPLPSQQPPPK) are enriched in pro residues. 5 disordered regions span residues 1-31 (MKPL…ENEA), 91-142 (TALS…ELGR), 156-483 (PQLA…RDLR), 510-554 (YTSK…STSR), and 607-629 (SERE…TFKK). Over residues 18–31 (DPEHPTPEEEENEA) the composition is skewed to basic and acidic residues. Residues 91–103 (TALSNEKQSDSPN) show a composition bias toward polar residues. A Phosphoserine modification is found at Ser132. The segment covering 156-166 (PQLAASTTAAS) has biased composition (low complexity). Residues 187–205 (PSSPPPPPPPPQASSPSPP) show a composition bias toward pro residues. A Phosphoserine modification is found at Ser242. The segment covering 264-291 (LEEHTVQTLKEQADHLLQKEDSHIGKEE) has biased composition (basic and acidic residues). Residues Ser322, Ser324, and Ser345 each carry the phosphoserine modification. Basic and acidic residues-rich tracts occupy residues 336–401 (RSHD…ERDR), 422–433 (RSERSHYYDSER), 440–468 (PYRE…EYKK), and 510–528 (YTSK…ETIK). A Glycyl lysine isopeptide (Lys-Gly) (interchain with G-Cter in SUMO2) cross-link involves residue Lys360. At Ser423 the chain carries Phosphoserine. Phosphoserine is present on residues Ser532, Ser614, and Ser624. Positions 613 to 625 (GSPTPSNQLNDSP) are enriched in polar residues. At Thr626 the chain carries Phosphothreonine. At Ser633 the chain carries Phosphoserine. Lys637 participates in a covalent cross-link: Glycyl lysine isopeptide (Lys-Gly) (interchain with G-Cter in SUMO2). Phosphoserine is present on residues Ser697, Ser707, Ser743, and Ser753. The tract at residues 729–749 (RDSDDTCRQHNTSKSPFREME) is disordered. Lys775 participates in a covalent cross-link: Glycyl lysine isopeptide (Lys-Gly) (interchain with G-Cter in SUMO2). Disordered stretches follow at residues 829–894 (CDNR…PTLD), 941–974 (QEAQ…HISD), 1015–1078 (EDYS…HYSD), and 1135–1185 (AHAQ…EDLP). A compositionally biased stretch (basic and acidic residues) spans 830–847 (DNREPTDRHSENTCDEYK). Residues 849–858 (SIGSTSSASH) show a composition bias toward polar residues. Over residues 867–883 (PIGSSGISSLQSPPSGI) the composition is skewed to low complexity. Residues 951 to 974 (LHERRGRPEIPLDEEQRGHTHISD) are compositionally biased toward basic and acidic residues. The span at 1026-1037 (DESDSEDTESDD) shows a compositional bias: acidic residues. Ser1077 carries the phosphoserine modification. Basic and acidic residues predominate over residues 1150–1165 (SRSDHLGHLNPEDTLR). Residue Ser1201 is modified to Phosphoserine. Disordered stretches follow at residues 1232–1254 (GWDF…SYGT), 1280–1346 (WDPR…APEI), and 1366–1396 (NFEK…GELQ). Polar residues-rich tracts occupy residues 1235-1254 (FSQQ…SYGT) and 1319-1329 (RSGSHFSSPSN). The segment covering 1366–1377 (NFEKNDIKERGP) has biased composition (basic and acidic residues). Phosphoserine is present on residues Ser1387, Ser1389, and Ser1391. The interval 1392-1688 (DGELQARKKV…KKERSRKKDS (297 aa)) is interaction with TUBA1A. The region spanning 1468 to 1522 (IKRMQCECTPLSKDERAQGEVACGEDCLNRLLMIECSSRCPNGDYCSNRRFQRKQ) is the AWS domain. 7 residues coordinate Zn(2+): Cys1473, Cys1475, Cys1490, Cys1494, Cys1503, Cys1507, and Cys1513. Residues 1524–1641 (ADVEVILTEK…SGSELTFDYQ (118 aa)) enclose the SET domain. Residues 1534 to 1536 (KGW), 1577 to 1579 (HYY), and 1602 to 1603 (NH) each bind S-adenosyl-L-methionine. Cys1605 provides a ligand contact to Zn(2+). One can recognise a Post-SET domain in the interval 1648–1664 (EAQKCFCGSANCRGYLG). S-adenosyl-L-methionine is bound at residue Gln1650. Cys1652 serves as a coordination point for Zn(2+). Phe1653 contacts S-adenosyl-L-methionine. Residues Cys1654 and Cys1659 each coordinate Zn(2+). Phosphoserine occurs at positions 1670, 1818, and 1819. The tract at residues 1806–1848 (TAVPQLSEGDGYSSENTSRAHTPLNTPDPSAKPSTEMDTDTPK) is disordered. The segment covering 1818-1833 (SSENTSRAHTPLNTPD) has biased composition (polar residues). A phosphothreonine mark is found at Thr1827 and Thr1846. A phosphoserine mark is found at Ser1862 and Ser1926. 2 disordered regions span residues 1914–1981 (SEAT…DISD) and 1993–2110 (LKEV…AQKQ). The segment covering 1934-1946 (TEPKDSNGTKLEE) has biased composition (basic and acidic residues). Acidic residues predominate over residues 1947-1964 (TIAEETPSQDEEEGVSDV). A phosphoserine mark is found at Ser1954, Ser1962, and Ser1969. 3 stretches are compositionally biased toward basic and acidic residues: residues 1965 to 1978 (ESER…KTVD), 1993 to 2020 (LKEV…DAAA), and 2032 to 2045 (RSRE…SQNK). A phosphoserine mark is found at Ser2053 and Ser2055. Basic and acidic residues-rich tracts occupy residues 2063 to 2073 (RGTKRPDDRYD) and 2084 to 2108 (KDRN…REAQ). Residues 2090-2119 (STEERRKLFEQEVAQREAQKQQQQMQNLGM) are a coiled coil. The interval 2110–2339 (QQQQMQNLGM…APGQPQSLQP (230 aa)) is low charge region. The region spanning 2362–2395 (IVLPPNWKTARDPEGKIYYYHVITRQTQWDPPTW) is the WW domain. The tract at residues 2412–2438 (LGTPTYDENPMKTSKKPKTAEADTSSE) is disordered. The interval 2430-2537 (TAEADTSSEL…YKPKEDTELE (108 aa)) is interaction with POLR2A.

This sequence belongs to the class V-like SAM-binding methyltransferase superfamily. Histone-lysine methyltransferase family. SET2 subfamily. In terms of assembly, specifically interacts with hyperphosphorylated C-terminal domain (CTD) of RNA polymerase II large subunit (POLR2A): binds to CTD heptad repeats doubly phosphorylated on 'Ser-2' and 'Ser-5' of each heptad. Interacts with HTT. Interacts with IWS1. Interacts with p53/TP53; leading to regulate p53/TP53 target genes. Component of a complex with HNRNPL. Interacts with TUBA1A; the interaction is independent on alpha-tubulin acetylation on 'Lys-40'. May be automethylated.

Its subcellular location is the nucleus. The protein localises to the chromosome. The enzyme catalyses L-lysyl(36)-[histone H3] + 3 S-adenosyl-L-methionine = N(6),N(6),N(6)-trimethyl-L-lysyl(36)-[histone H3] + 3 S-adenosyl-L-homocysteine + 3 H(+). It carries out the reaction L-lysyl-[protein] + S-adenosyl-L-methionine = N(6)-methyl-L-lysyl-[protein] + S-adenosyl-L-homocysteine + H(+). It catalyses the reaction L-lysyl-[protein] + 3 S-adenosyl-L-methionine = N(6),N(6),N(6)-trimethyl-L-lysyl-[protein] + 3 S-adenosyl-L-homocysteine + 3 H(+). Its activity is regulated as follows. Specifically inhibited by sinefungin derivatives. Functionally, histone methyltransferase that specifically trimethylates 'Lys-36' of histone H3 (H3K36me3) using dimethylated 'Lys-36' (H3K36me2) as substrate. It is capable of trimethylating unmethylated H3K36 (H3K36me0) in vitro. Represents the main enzyme generating H3K36me3, a specific tag for epigenetic transcriptional activation. Plays a role in chromatin structure modulation during elongation by coordinating recruitment of the FACT complex and by interacting with hyperphosphorylated POLR2A. Acts as a key regulator of DNA mismatch repair in G1 and early S phase by generating H3K36me3, a mark required to recruit MSH6 subunit of the MutS alpha complex: early recruitment of the MutS alpha complex to chromatin to be replicated allows a quick identification of mismatch DNA to initiate the mismatch repair reaction. Required for DNA double-strand break repair in response to DNA damage: acts by mediating formation of H3K36me3, promoting recruitment of RAD51 and DNA repair via homologous recombination (HR). Acts as a tumor suppressor. H3K36me3 also plays an essential role in the maintenance of a heterochromatic state, by recruiting DNA methyltransferase DNMT3A. H3K36me3 is also enhanced in intron-containing genes, suggesting that SETD2 recruitment is enhanced by splicing and that splicing is coupled to recruitment of elongating RNA polymerase. Required during angiogenesis. Required for endoderm development by promoting embryonic stem cell differentiation toward endoderm: acts by mediating formation of H3K36me3 in distal promoter regions of FGFR3, leading to regulate transcription initiation of FGFR3. In addition to histones, also mediates methylation of other proteins, such as tubulins and STAT1. Trimethylates 'Lys-40' of alpha-tubulins such as TUBA1B (alpha-TubK40me3); alpha-TubK40me3 is required for normal mitosis and cytokinesis and may be a specific tag in cytoskeletal remodeling. Involved in interferon-alpha-induced antiviral defense by mediating both monomethylation of STAT1 at 'Lys-525' and catalyzing H3K36me3 on promoters of some interferon-stimulated genes (ISGs) to activate gene transcription. The chain is Histone-lysine N-methyltransferase SETD2 from Mus musculus (Mouse).